The following is a 512-amino-acid chain: Catalase (512 aa).

Catalysis depends on residues His-60 and Asn-133. A heme-binding site is contributed by Tyr-344. Phosphoserine is present on Ser-363. Residues 488 to 505 show a composition bias toward basic and acidic residues; it reads EVKKMEEKAPKPINKGEP. The disordered stretch occupies residues 488–512; sequence EVKKMEEKAPKPINKGEPHMFQGSS.

It belongs to the catalase family. It depends on heme as a cofactor.

The protein resides in the peroxisome matrix. The enzyme catalyses 2 H2O2 = O2 + 2 H2O. Catalyzes the degradation of hydrogen peroxide (H(2)O(2)) generated by peroxisomal oxidases to water and oxygen, thereby protecting cells from the toxic effects of hydrogen peroxide. The chain is Catalase (cta1) from Schizosaccharomyces pombe (strain 972 / ATCC 24843) (Fission yeast).